The primary structure comprises 150 residues: Putative HTH-type transcriptional regulator HI_0379 (150 aa).

An HTH rrf2-type domain is found at 2 to 131 (KLTSKGRYAV…NEITLAELVN (130 aa)).

This chain is Putative HTH-type transcriptional regulator HI_0379, found in Haemophilus influenzae (strain ATCC 51907 / DSM 11121 / KW20 / Rd).